We begin with the raw amino-acid sequence, 130 residues long: Small ribosomal subunit protein uS9 (130 aa).

Belongs to the universal ribosomal protein uS9 family.

This Citrobacter koseri (strain ATCC BAA-895 / CDC 4225-83 / SGSC4696) protein is Small ribosomal subunit protein uS9.